Here is a 941-residue protein sequence, read N- to C-terminus: Glycine dehydrogenase (decarboxylating) (941 aa).

N6-(pyridoxal phosphate)lysine is present on Lys-692.

It belongs to the GcvP family. The glycine cleavage system is composed of four proteins: P, T, L and H. Pyridoxal 5'-phosphate serves as cofactor.

The enzyme catalyses N(6)-[(R)-lipoyl]-L-lysyl-[glycine-cleavage complex H protein] + glycine + H(+) = N(6)-[(R)-S(8)-aminomethyldihydrolipoyl]-L-lysyl-[glycine-cleavage complex H protein] + CO2. The glycine cleavage system catalyzes the degradation of glycine. The P protein binds the alpha-amino group of glycine through its pyridoxal phosphate cofactor; CO(2) is released and the remaining methylamine moiety is then transferred to the lipoamide cofactor of the H protein. In Mycobacterium avium (strain 104), this protein is Glycine dehydrogenase (decarboxylating).